The primary structure comprises 562 residues: Arginine--tRNA ligase (562 aa).

A 'HIGH' region motif is present at residues 121–131; the sequence is PNIAKPFSVGH.

This sequence belongs to the class-I aminoacyl-tRNA synthetase family. In terms of assembly, monomer.

The protein localises to the cytoplasm. The enzyme catalyses tRNA(Arg) + L-arginine + ATP = L-arginyl-tRNA(Arg) + AMP + diphosphate. The polypeptide is Arginine--tRNA ligase (Streptococcus suis (strain 98HAH33)).